A 146-amino-acid chain; its full sequence is Ribosome maturation factor RimP (146 aa).

It belongs to the RimP family.

Its subcellular location is the cytoplasm. Required for maturation of 30S ribosomal subunits. The polypeptide is Ribosome maturation factor RimP (Helicobacter pylori (strain J99 / ATCC 700824) (Campylobacter pylori J99)).